The chain runs to 417 residues: Serine hydroxymethyltransferase 1 (417 aa).

Residues Leu-121 and 125-127 (GHL) contribute to the (6S)-5,6,7,8-tetrahydrofolate site. An N6-(pyridoxal phosphate)lysine modification is found at Lys-229. 354–356 (SPF) provides a ligand contact to (6S)-5,6,7,8-tetrahydrofolate.

This sequence belongs to the SHMT family. In terms of assembly, homodimer. It depends on pyridoxal 5'-phosphate as a cofactor.

The protein localises to the cytoplasm. It catalyses the reaction (6R)-5,10-methylene-5,6,7,8-tetrahydrofolate + glycine + H2O = (6S)-5,6,7,8-tetrahydrofolate + L-serine. Its pathway is one-carbon metabolism; tetrahydrofolate interconversion. It participates in amino-acid biosynthesis; glycine biosynthesis; glycine from L-serine: step 1/1. Its function is as follows. Catalyzes the reversible interconversion of serine and glycine with tetrahydrofolate (THF) serving as the one-carbon carrier. This reaction serves as the major source of one-carbon groups required for the biosynthesis of purines, thymidylate, methionine, and other important biomolecules. Also exhibits THF-independent aldolase activity toward beta-hydroxyamino acids, producing glycine and aldehydes, via a retro-aldol mechanism. The protein is Serine hydroxymethyltransferase 1 of Pseudomonas savastanoi pv. phaseolicola (strain 1448A / Race 6) (Pseudomonas syringae pv. phaseolicola (strain 1448A / Race 6)).